We begin with the raw amino-acid sequence, 267 residues long: Undecaprenyl-diphosphatase (267 aa).

Helical transmembrane passes span 1 to 21, 40 to 60, 85 to 105, 112 to 132, 188 to 208, 219 to 239, and 245 to 265; these read MPLL…FLPV, GQAI…LFFW, LALG…FLYF, LRSV…LYIA, IAML…GTEV, DMGI…ALMM, and VSFT…LFIA.

The protein belongs to the UppP family.

The protein localises to the cell inner membrane. The enzyme catalyses di-trans,octa-cis-undecaprenyl diphosphate + H2O = di-trans,octa-cis-undecaprenyl phosphate + phosphate + H(+). Functionally, catalyzes the dephosphorylation of undecaprenyl diphosphate (UPP). Confers resistance to bacitracin. The protein is Undecaprenyl-diphosphatase of Ruegeria sp. (strain TM1040) (Silicibacter sp.).